The chain runs to 147 residues: uncharacterized protein (147 aa).

2 disordered regions span residues 1 to 49 and 125 to 147; these read MRTP…NLNE and SPSP…RKSN. Composition is skewed to low complexity over residues 8-49 and 125-140; these read NNNY…NLNE and SPSP…PQNT.

This is an uncharacterized protein from Dictyostelium discoideum (Social amoeba).